The following is a 353-amino-acid chain: Nicotinate-nucleotide--dimethylbenzimidazole phosphoribosyltransferase (353 aa).

Glu-319 serves as the catalytic Proton acceptor.

The protein belongs to the CobT family.

It catalyses the reaction 5,6-dimethylbenzimidazole + nicotinate beta-D-ribonucleotide = alpha-ribazole 5'-phosphate + nicotinate + H(+). The protein operates within nucleoside biosynthesis; alpha-ribazole biosynthesis; alpha-ribazole from 5,6-dimethylbenzimidazole: step 1/2. Functionally, catalyzes the synthesis of alpha-ribazole-5'-phosphate from nicotinate mononucleotide (NAMN) and 5,6-dimethylbenzimidazole (DMB). This Prosthecochloris aestuarii (strain DSM 271 / SK 413) protein is Nicotinate-nucleotide--dimethylbenzimidazole phosphoribosyltransferase.